Reading from the N-terminus, the 289-residue chain is Protease HtpX (289 aa).

Helical transmembrane passes span 7–27 and 38–58; these read LFLL…NIIF and GGIL…SLFM. His144 provides a ligand contact to Zn(2+). The active site involves Glu145. Zn(2+) is bound at residue His148. A run of 2 helical transmembrane segments spans residues 155 to 175 and 194 to 214; these read VTMT…SRII and LVFW…ATMI. Zn(2+) is bound at residue Glu223.

This sequence belongs to the peptidase M48B family. Zn(2+) is required as a cofactor.

The protein resides in the cell inner membrane. This chain is Protease HtpX, found in Actinobacillus pleuropneumoniae serotype 5b (strain L20).